We begin with the raw amino-acid sequence, 364 residues long: tRNA 2-selenouridine synthase (364 aa).

The Rhodanese domain maps to Leu14–Trp137. Catalysis depends on Cys97, which acts as the S-selanylcysteine intermediate.

It belongs to the SelU family. Monomer.

The catalysed reaction is 5-methylaminomethyl-2-thiouridine(34) in tRNA + selenophosphate + (2E)-geranyl diphosphate + H2O + H(+) = 5-methylaminomethyl-2-selenouridine(34) in tRNA + (2E)-thiogeraniol + phosphate + diphosphate. It carries out the reaction 5-methylaminomethyl-2-thiouridine(34) in tRNA + (2E)-geranyl diphosphate = 5-methylaminomethyl-S-(2E)-geranyl-thiouridine(34) in tRNA + diphosphate. It catalyses the reaction 5-methylaminomethyl-S-(2E)-geranyl-thiouridine(34) in tRNA + selenophosphate + H(+) = 5-methylaminomethyl-2-(Se-phospho)selenouridine(34) in tRNA + (2E)-thiogeraniol. The enzyme catalyses 5-methylaminomethyl-2-(Se-phospho)selenouridine(34) in tRNA + H2O = 5-methylaminomethyl-2-selenouridine(34) in tRNA + phosphate. Involved in the post-transcriptional modification of the uridine at the wobble position (U34) of tRNA(Lys), tRNA(Glu) and tRNA(Gln). Catalyzes the conversion of 2-thiouridine (S2U-RNA) to 2-selenouridine (Se2U-RNA). Acts in a two-step process involving geranylation of 2-thiouridine (S2U) to S-geranyl-2-thiouridine (geS2U) and subsequent selenation of the latter derivative to 2-selenouridine (Se2U) in the tRNA chain. The chain is tRNA 2-selenouridine synthase from Salmonella paratyphi B (strain ATCC BAA-1250 / SPB7).